Consider the following 510-residue polypeptide: NAD(P)H-quinone oxidoreductase subunit 2 A, chloroplastic (510 aa).

13 consecutive transmembrane segments (helical) span residues 24–44 (LLLF…GLIL), 57–77 (IPWL…ALLF), 99–119 (IFQF…VEYI), 124–144 (MALT…MFLC), 149–169 (LITI…LSGY), 183–203 (YLLM…WLYG), 227–247 (PGIS…LSPA), 295–315 (WHLL…LIAI), 323–343 (MLAY…IVGD), 354–374 (YMLF…LFGL), 395–415 (ALSL…AGFF), 418–438 (IYLF…IGLL), and 484–504 (MIVC…IITI).

It belongs to the complex I subunit 2 family. In terms of assembly, NDH is composed of at least 16 different subunits, 5 of which are encoded in the nucleus.

The protein resides in the plastid. It is found in the chloroplast thylakoid membrane. The enzyme catalyses a plastoquinone + NADH + (n+1) H(+)(in) = a plastoquinol + NAD(+) + n H(+)(out). The catalysed reaction is a plastoquinone + NADPH + (n+1) H(+)(in) = a plastoquinol + NADP(+) + n H(+)(out). In terms of biological role, NDH shuttles electrons from NAD(P)H:plastoquinone, via FMN and iron-sulfur (Fe-S) centers, to quinones in the photosynthetic chain and possibly in a chloroplast respiratory chain. The immediate electron acceptor for the enzyme in this species is believed to be plastoquinone. Couples the redox reaction to proton translocation, and thus conserves the redox energy in a proton gradient. This Spinacia oleracea (Spinach) protein is NAD(P)H-quinone oxidoreductase subunit 2 A, chloroplastic.